A 375-amino-acid polypeptide reads, in one-letter code: 23S rRNA (uracil(747)-C(5))-methyltransferase RlmC (375 aa).

[4Fe-4S] cluster is bound by residues Cys3, Cys11, Cys14, and Cys87. Residues Gln212, Phe241, Glu262, and Asn307 each coordinate S-adenosyl-L-methionine. Cys334 serves as the catalytic Nucleophile.

This sequence belongs to the class I-like SAM-binding methyltransferase superfamily. RNA M5U methyltransferase family. RlmC subfamily.

It carries out the reaction uridine(747) in 23S rRNA + S-adenosyl-L-methionine = 5-methyluridine(747) in 23S rRNA + S-adenosyl-L-homocysteine + H(+). Catalyzes the formation of 5-methyl-uridine at position 747 (m5U747) in 23S rRNA. In Salmonella paratyphi A (strain ATCC 9150 / SARB42), this protein is 23S rRNA (uracil(747)-C(5))-methyltransferase RlmC.